Reading from the N-terminus, the 244-residue chain is Ferric aerobactin reductase IutB (244 aa).

[2Fe-2S] cluster contacts are provided by Cys220, Cys221, Cys232, and Cys235.

Monomer. It depends on [2Fe-2S] cluster as a cofactor.

The protein localises to the cytoplasm. It catalyses the reaction 2 a Fe(II)-siderophore + NAD(+) + H(+) = 2 a Fe(III)-siderophore + NADH. The enzyme catalyses 2 a Fe(II)-siderophore + NADP(+) + H(+) = 2 a Fe(III)-siderophore + NADPH. In terms of biological role, ferric-siderophore reductase involved in iron removal from the siderophores after their transport into the cell. Acts as a major ferric-aerobactin reductase catalyzing the reduction of Fe(3+)-aerobactin, a citrate-hydroxamate siderophore produced by other bacteria. Catalyzes reduction of Fe(3+)-vulnibactin, a catecholate siderophore synthesized by V.vulnificus, in the absence of VuuB. Catalyzes reduction of ferrioxamine B and Fe(3+)-vibriobactin in vitro. No activity with Fe(3+)-enterobactin. Catalyzes reduction of ferric chelating compound Fe(3+)-nitrilotriacetic acid (NTA) in the presence of NADH, NADPH or reduced glutathione (GSH) as its electron donor in vitro. Also catalyzes reduction of ferric chelating compounds Fe(3+)-citrate and Fe(3+)-EDTA as well as non-complexed FeCl3 in the presence of GSH as its electron donor in vitro. Highest activity with Fe(3+)-NTA as electron acceptor and GSH as donor. This chain is Ferric aerobactin reductase IutB, found in Vibrio vulnificus.